Here is a 32-residue protein sequence, read N- to C-terminus: U21-ctenitoxin-Co1a (32 aa).

Disulfide bonds link cysteine 3–cysteine 17, cysteine 10–cysteine 21, and cysteine 16–cysteine 30.

Expressed by the venom gland.

The protein localises to the secreted. Functionally, not toxic to mice by intracerebroventricular injection. The protein is U21-ctenitoxin-Co1a of Ctenus ornatus (Brazilian spider).